Consider the following 899-residue polypeptide: Translation initiation factor IF-2 (899 aa).

2 disordered regions span residues 65-84 and 91-310; these read KTRS…SVQI and TYVK…SFNK. The segment covering 68 to 82 has biased composition (polar residues); the sequence is STLNVPSTGGKSKSV. Basic and acidic residues predominate over residues 108 to 164; sequence QARREAEEQAQRAAEEQAKREAELREAAEKAKRAADEQAKREAAEKAKRDVAEKEKV. Positions 165 to 174 are enriched in polar residues; it reads TNQQNENMTK. Residues 177–236 show a composition bias toward basic and acidic residues; that stretch reads QAEKAKREAEAAELKRKAEEAARLKVEEEARRIAEEARRMAEENAGRWEAESAKPEESAD. Residues 262–276 show a composition bias toward basic residues; the sequence is SRSRAGKVTKQKKGN. Basic and acidic residues predominate over residues 277–290; sequence RQSESKADREEARA. One can recognise a tr-type G domain in the interval 398–567; it reads ARAPVVTIMG…LLQAEVLELK (170 aa). The tract at residues 407 to 414 is G1; sequence GHVDHGKT. Position 407–414 (407–414) interacts with GTP; that stretch reads GHVDHGKT. Residues 432 to 436 are G2; it reads GITQH. The G3 stretch occupies residues 453–456; sequence DTPG. GTP contacts are provided by residues 453–457 and 507–510; these read DTPGH and NKID. The G4 stretch occupies residues 507–510; sequence NKID. The tract at residues 543–545 is G5; that stretch reads SAK.

The protein belongs to the TRAFAC class translation factor GTPase superfamily. Classic translation factor GTPase family. IF-2 subfamily.

It is found in the cytoplasm. One of the essential components for the initiation of protein synthesis. Protects formylmethionyl-tRNA from spontaneous hydrolysis and promotes its binding to the 30S ribosomal subunits. Also involved in the hydrolysis of GTP during the formation of the 70S ribosomal complex. The chain is Translation initiation factor IF-2 from Pectobacterium carotovorum subsp. carotovorum (strain PC1).